Here is a 428-residue protein sequence, read N- to C-terminus: 3-phosphoshikimate 1-carboxyvinyltransferase (428 aa).

The 3-phosphoshikimate site is built by lysine 21, serine 22, and arginine 26. Residue lysine 21 participates in phosphoenolpyruvate binding. 2 residues coordinate phosphoenolpyruvate: glycine 91 and arginine 119. Residues serine 164, glutamine 166, aspartate 313, and lysine 340 each coordinate 3-phosphoshikimate. Glutamine 166 contacts phosphoenolpyruvate. Aspartate 313 acts as the Proton acceptor in catalysis. The phosphoenolpyruvate site is built by arginine 344 and arginine 386.

It belongs to the EPSP synthase family. Monomer.

The protein localises to the cytoplasm. It catalyses the reaction 3-phosphoshikimate + phosphoenolpyruvate = 5-O-(1-carboxyvinyl)-3-phosphoshikimate + phosphate. The protein operates within metabolic intermediate biosynthesis; chorismate biosynthesis; chorismate from D-erythrose 4-phosphate and phosphoenolpyruvate: step 6/7. Catalyzes the transfer of the enolpyruvyl moiety of phosphoenolpyruvate (PEP) to the 5-hydroxyl of shikimate-3-phosphate (S3P) to produce enolpyruvyl shikimate-3-phosphate and inorganic phosphate. This chain is 3-phosphoshikimate 1-carboxyvinyltransferase, found in Campylobacter jejuni subsp. doylei (strain ATCC BAA-1458 / RM4099 / 269.97).